We begin with the raw amino-acid sequence, 340 residues long: Guanine nucleotide-binding protein subunit beta-4 (340 aa).

Ser2 is subject to N-acetylserine. The residue at position 2 (Ser2) is a Phosphoserine. 5 WD repeats span residues 53 to 92, 95 to 134, 141 to 179, 182 to 221, and 224 to 263; these read GHLA…KMHA, LRSS…GNVR, GHTG…QTTT, GHSG…CRQS, and GHVS…ELLL. His266 bears the Phosphohistidine mark. WD repeat units follow at residues 268-307 and 310-339; these read NIIC…RAGV and GHDN…LRIW.

It belongs to the WD repeat G protein beta family. As to quaternary structure, g proteins are composed of 3 units, alpha, beta and gamma. In terms of tissue distribution, strongly expressed in lung and placenta, whereas it is weakly expressed in brain and heart. Abundantly expressed in the axons and Schwann cells of peripheral nerves.

Its function is as follows. Guanine nucleotide-binding proteins (G proteins) are involved as a modulator or transducer in various transmembrane signaling systems. The beta and gamma chains are required for the GTPase activity, for replacement of GDP by GTP, and for G protein-effector interaction. This chain is Guanine nucleotide-binding protein subunit beta-4 (GNB4), found in Homo sapiens (Human).